Consider the following 337-residue polypeptide: Alcohol dehydrogenase (337 aa).

7 residues coordinate Zn(2+): C38, H61, C92, C95, C98, C106, and C148. Residues 172 to 177, D195, K200, 260 to 262, and R331 contribute to the NAD(+) site; these read GIGGLG and VGL.

Belongs to the zinc-containing alcohol dehydrogenase family. Zn(2+) serves as cofactor.

The enzyme catalyses a primary alcohol + NAD(+) = an aldehyde + NADH + H(+). The catalysed reaction is a secondary alcohol + NAD(+) = a ketone + NADH + H(+). Substrate inhibition is not observed with any alcohols, and the enzyme-NADH dissociation is not considered to be a rate-limiting step. Functionally, NAD(+)-dependent alcohol dehydrogenase. The chain is Alcohol dehydrogenase (adhT) from Geobacillus stearothermophilus (Bacillus stearothermophilus).